The chain runs to 265 residues: Zwei Ig domain protein zig-1 (265 aa).

The signal sequence occupies residues 1–17 (MKNLLLITFFVVSTVTA). Topologically, residues 18 to 232 (LGGRGSKSAL…KMVDVRSEFQ (215 aa)) are extracellular. Ig-like C2-type domains are found at residues 41 to 108 (HATD…TPHG) and 120 to 220 (PVVH…MLLV). N-linked (GlcNAc...) asparagine glycosylation is found at N83 and N193. A disulfide bond links C155 and C202. A helical membrane pass occupies residues 233-253 (WVYPLAVILITIFLLVVIIVF). The Cytoplasmic portion of the chain corresponds to 254–265 (CEWRNKKSTSKA).

In terms of tissue distribution, expressed in neurons and body wall muscles.

Its subcellular location is the cell membrane. In terms of biological role, probably not involved in maintaining the position of ASI and ASH head neuron cell bodies and ventral nerve cord axons of PVQ, PVP, RMEV, AVK and HSN neurons. The chain is Zwei Ig domain protein zig-1 from Caenorhabditis elegans.